Here is a 66-residue protein sequence, read N- to C-terminus: Prophage transcriptional regulatory protein (66 aa).

In Escherichia coli (strain K12), this protein is Prophage transcriptional regulatory protein (croE).